We begin with the raw amino-acid sequence, 334 residues long: G-protein coupled receptor 12 (334 aa).

Residues 1 to 48 lie on the Extracellular side of the membrane; sequence MNEDLKVNLSGLPRDYLDAAAAENISAAVSSRVPAVEPEPELVVNPWD. N-linked (GlcNAc...) asparagine glycosylation is found at asparagine 8 and asparagine 24. A helical membrane pass occupies residues 49–69; that stretch reads IVLCTSGTLISCENAIVVLII. The Cytoplasmic segment spans residues 70–77; that stretch reads FHNPSLRA. A helical transmembrane segment spans residues 78 to 98; sequence PMFLLIGSLALADLLAGIGLI. The Extracellular portion of the chain corresponds to 99-113; the sequence is TNFVFAYLLQSEATK. A helical membrane pass occupies residues 114 to 134; it reads LVTIGLIVASFSASVCSLLAI. Topologically, residues 135 to 158 are cytoplasmic; the sequence is TVDRYLSLYYALTYHSERTVTFTY. The helical transmembrane segment at 159–179 threads the bilayer; it reads VMLVMLWGTSICLGLLPVMGW. Topologically, residues 180–199 are extracellular; sequence NCLRDESTCSVVRPLTKNNA. A helical transmembrane segment spans residues 200–220; it reads AILSVSFLFMFALMLQLYIQI. Topologically, residues 221-252 are cytoplasmic; the sequence is CKIVMRHAHQIALQHHFLATSHYVTTRKGVST. Residues 253 to 273 traverse the membrane as a helical segment; the sequence is LAIILGTFAACWMPFTLYSLI. Over 274–282 the chain is Extracellular; sequence ADYTYPSIY. A helical transmembrane segment spans residues 283–303; sequence TYATLLPATYNSIINPVIYAF. Over 304–334 the chain is Cytoplasmic; that stretch reads RNQEIQKALCLICCGCIPSSLAQRARSPSDV. A lipid anchor (S-palmitoyl cysteine) is attached at cysteine 317. Residues serine 330 and serine 332 each carry the phosphoserine modification.

Belongs to the G-protein coupled receptor 1 family.

The protein localises to the cell membrane. In terms of biological role, promotes neurite outgrowth and blocks myelin inhibition in neurons. Receptor with constitutive G(s) signaling activity that stimulates cyclic AMP production. The polypeptide is G-protein coupled receptor 12 (GPR12) (Homo sapiens (Human)).